Here is a 136-residue protein sequence, read N- to C-terminus: Non-structural protein 1 (136 aa).

It belongs to the pneumovirus non-structural protein 1 family. Monomer. Homomultimer. Heteromultimer with NS2. Interacts with the matrix protein M. Interacts with host ELOC and CUL2; this interaction allows NS1 to form an active E3 ligase with ELOC and CUL2. Interacts with host IRF3; this interaction leads to the disrupted association of IRF3 with CREBBP and thus reduced binding of IRF3 to the IFN-beta promoter. Interacts with host MAVS; this interaction prevents MAVS binding to RIGI and inhibits signaling pathway leading to interferon production. Interacts with host TRIM25 (via SPRY domain); this interaction suppresses RIGI ubiquitination and results in decreased interaction between RIGI and MAVS.

The protein localises to the host cytoplasm. It localises to the host mitochondrion. Its subcellular location is the host nucleus. In terms of biological role, plays a major role in antagonizing the type I IFN-mediated antiviral response by degrading or inhibiting multiple cellular factors required for either IFN induction or response pathways. Acts cooperatively with NS2 to repress activation and nuclear translocation of host IFN-regulatory factor IRF3. Also disrupts the association of IRF3 with CREBBP. Interacts with host mitochondrial-associated membrane (MAM) MAVS and prevents the interaction with RIGI. Interacts with TRIM25 to suppress TRIM25-mediated RIGI ubiquitination and thereby RIGI-MAVS interaction. Together with NS2, participates in the proteasomal degradation of host STAT2, IRF3, IRF7, TBK1 and RIGI through a NS-degradasome involving CUL2 and Elongin-C. The degradasome requires an intact mitochondrial MAVS. Decreases the levels of host TRAF3 and IKBKE/IKK-epsilon. As functions other than disruptions of the type I IFN-mediated antiviral signaling pathways, induces host SOCS1 and SOCS3 expression. Suppresses premature apoptosis by an NF-kappa-B-dependent, interferon-independent mechanism and thus facilitates virus growth. Additionally, NS1 may serve some inhibitory role in viral transcription and RNA replication. Suppresses proliferation and activation of host CD103+ CD8+ cytotoxic T-lymphocytes and Th17 helper T-lymphocytes. In Ovis aries (Sheep), this protein is Non-structural protein 1 (1C).